The chain runs to 130 residues: Large ribosomal subunit protein bL12 (130 aa).

Belongs to the bacterial ribosomal protein bL12 family. In terms of assembly, homodimer. Part of the ribosomal stalk of the 50S ribosomal subunit. Forms a multimeric L10(L12)X complex, where L10 forms an elongated spine to which 2 to 4 L12 dimers bind in a sequential fashion. Binds GTP-bound translation factors.

In terms of biological role, forms part of the ribosomal stalk which helps the ribosome interact with GTP-bound translation factors. Is thus essential for accurate translation. The sequence is that of Large ribosomal subunit protein bL12 from Synechococcus sp. (strain WH7803).